Reading from the N-terminus, the 476-residue chain is Ribulose bisphosphate carboxylase large chain (476 aa).

Substrate contacts are provided by asparagine 116 and threonine 166. Residue lysine 168 is the Proton acceptor of the active site. Residue lysine 170 participates in substrate binding. Residues lysine 194, aspartate 196, and glutamate 197 each coordinate Mg(2+). An N6-carboxylysine modification is found at lysine 194. Catalysis depends on histidine 286, which acts as the Proton acceptor. Positions 287, 319, and 371 each coordinate substrate.

It belongs to the RuBisCO large chain family. Type I subfamily. In terms of assembly, heterohexadecamer of 8 large chains and 8 small chains. Mg(2+) is required as a cofactor.

It catalyses the reaction 2 (2R)-3-phosphoglycerate + 2 H(+) = D-ribulose 1,5-bisphosphate + CO2 + H2O. The catalysed reaction is D-ribulose 1,5-bisphosphate + O2 = 2-phosphoglycolate + (2R)-3-phosphoglycerate + 2 H(+). Functionally, ruBisCO catalyzes two reactions: the carboxylation of D-ribulose 1,5-bisphosphate, the primary event in carbon dioxide fixation, as well as the oxidative fragmentation of the pentose substrate. Both reactions occur simultaneously and in competition at the same active site. The chain is Ribulose bisphosphate carboxylase large chain from Pseudonocardia dioxanivorans (strain ATCC 55486 / DSM 44775 / JCM 13855 / CB1190).